We begin with the raw amino-acid sequence, 117 residues long: uncharacterized protein (117 aa).

The N-terminal stretch at 1 to 20 (MAAVHLYIISFTALMISSTS) is a signal peptide.

This is an uncharacterized protein from Saccharomyces cerevisiae (strain ATCC 204508 / S288c) (Baker's yeast).